Consider the following 373-residue polypeptide: Flagellar P-ring protein (373 aa).

The first 28 residues, 1-28 (MPSVSAVILKLAAAALSALLLSGVAANA), serve as a signal peptide directing secretion.

Belongs to the FlgI family. In terms of assembly, the basal body constitutes a major portion of the flagellar organelle and consists of four rings (L,P,S, and M) mounted on a central rod.

Its subcellular location is the periplasm. It localises to the bacterial flagellum basal body. Its function is as follows. Assembles around the rod to form the L-ring and probably protects the motor/basal body from shearing forces during rotation. This Rhodopseudomonas palustris (strain HaA2) protein is Flagellar P-ring protein.